Reading from the N-terminus, the 443-residue chain is Probable 26S proteasome regulatory subunit 4 (443 aa).

Positions 1 to 53 (MGQQQSGFGGRGNDRGAGDGEKKEKKKYEAPIPSRIGKKKKGSKGPDAASKLP) are disordered. The segment covering 12-29 (GNDRGAGDGEKKEKKKYE) has biased composition (basic and acidic residues). 229 to 236 (GCPGTGKT) is an ATP binding site.

This sequence belongs to the AAA ATPase family.

Its subcellular location is the cytoplasm. The protein localises to the nucleus. In terms of biological role, the 26S proteasome is involved in the ATP-dependent degradation of ubiquitinated proteins. The regulatory (or ATPase) complex confers ATP dependency and substrate specificity to the 26S complex. May play a role in the degradation of microtubule severing protein mei-1. In Caenorhabditis elegans, this protein is Probable 26S proteasome regulatory subunit 4 (rpt-2).